The sequence spans 252 residues: Aspartate/glutamate leucyltransferase (252 aa).

It belongs to the R-transferase family. Bpt subfamily.

It is found in the cytoplasm. The enzyme catalyses N-terminal L-glutamyl-[protein] + L-leucyl-tRNA(Leu) = N-terminal L-leucyl-L-glutamyl-[protein] + tRNA(Leu) + H(+). It catalyses the reaction N-terminal L-aspartyl-[protein] + L-leucyl-tRNA(Leu) = N-terminal L-leucyl-L-aspartyl-[protein] + tRNA(Leu) + H(+). Functions in the N-end rule pathway of protein degradation where it conjugates Leu from its aminoacyl-tRNA to the N-termini of proteins containing an N-terminal aspartate or glutamate. The protein is Aspartate/glutamate leucyltransferase of Polynucleobacter necessarius subsp. necessarius (strain STIR1).